The chain runs to 256 residues: Pimeloyl-[acyl-carrier protein] methyl ester esterase (256 aa).

The region spanning His-15–Pro-242 is the AB hydrolase-1 domain. Substrate is bound by residues Trp-22, Ser-82–Leu-83, and Phe-143–Gln-147. Ser-82 serves as the catalytic Nucleophile. Residues Asp-207 and His-235 contribute to the active site. Residue His-235 coordinates substrate.

It belongs to the AB hydrolase superfamily. Carboxylesterase BioH family. Monomer.

It localises to the cytoplasm. It carries out the reaction 6-carboxyhexanoyl-[ACP] methyl ester + H2O = 6-carboxyhexanoyl-[ACP] + methanol + H(+). It participates in cofactor biosynthesis; biotin biosynthesis. In terms of biological role, the physiological role of BioH is to remove the methyl group introduced by BioC when the pimeloyl moiety is complete. It allows to synthesize pimeloyl-ACP via the fatty acid synthetic pathway through the hydrolysis of the ester bonds of pimeloyl-ACP esters. The protein is Pimeloyl-[acyl-carrier protein] methyl ester esterase of Shigella dysenteriae serotype 1 (strain Sd197).